Here is a 1235-residue protein sequence, read N- to C-terminus: MSHEELTALAPVGPAAFLYFSRLNAETQEILATLSLCDRSSSVVIAPLLAGLTVEADFGVSVRTPVLCYDGGVLTKVTSFCPFALYFHHTQGIVAFTEDHGDVHRLCEDARQKYALEAYTPEADRVPTDLAALCAAVGCQASETTVHVVVGNGLKEFLFAGQLIPCVEEATTVRLHGGEAVRVPLYPPTLFNSLQLDAEADEVSLDARSAFVEARGLYVPAVSETLFYYVYTSWCQSLRFSEPRVLIEAALRQFVHDSQQSVKLAPHKRYLGYMSQRLSSLEKDHLMLSDAVVCELAFSFASVFFDSAYQPAESMLFSEWPLVTNATDHRDLIRALTELKLHLSTHVAALVFSANSVLYQHRLVYLQSSARHPSAGGTASQETLLKAIQFTNGLSAACEDVYNDARKVLKFQGAPLKDERYGPQHLALVCGTCPQLVSGFVWYLNRVSVYNTGLSGSSTLTNHLVGCAAGLCEACGGTCCHTCYQTAFVRVRTRLPVVPKQPKKEPCVITVQSRFLNDVDILGSFGRRYNVDAKDGGLDGKGDDGVPGGGAGGGGGRDVSGGPSDGLGGGRGGGGGGDSGGMMGRGGRMLGASVDRTYRLNRILDYCRKMRLIDPVTGEDTFSAHGKSDFVAVFSALNKFVDDEALGFVSEVRLKSSRDEVAGATQAFNLDLNPYAVAFQPLLAYAYFRSVFYVIQNVALITATSYIVDNPLTTNLVSKWMTQHFQSIHGAFSTTSSRKGFLFTKQIKSSKNSDHDRLLDFRLYAQGTYAVVPMEIKLSRLSVPTLIMVRVKNRPIYRAGKGNAGSVFFRRDHVPRRNPAKGCLGFLLYRHHERLFPECGLPCLQFWQKVCSNALPKNVPIGDMGEFNAFVKFLVAVTADYQEHDLLDVAPDCVLSYVESRFHNKFLCYYGFKDYIGSLHGLTTRLTTQNHAQFPHVLGASPRFSSPAEFALHVKGLKTAGVPAPMAATVARESLVRSVFEHRSLVTVPVSVEKYAGINNSKEIYQFGQIGYFSGNGVERSLNVSSMSGQDYRFMRQRYLLATRLADVLIKRSRRENVLFDADLIKNRVMLALDAENLDCDPEVMAVYEILSVREEIPASDDVLFFVDGCEALAASLMDKFAALQEQGVEDFSLENLRRVLDADAQRLTDAAGGEVHDLSALFAPSGVGAASGVGGGGLLLGESVAGNSICFGVPGETGGGCFLVNAGEDEAGGVGGSSGGGGGSGLLPAKRSRL.

Positions 536 to 584 (GGLDGKGDDGVPGGGAGGGGGRDVSGGPSDGLGGGRGGGGGGDSGGMMG) are disordered. Over residues 545 to 584 (GVPGGGAGGGGGRDVSGGPSDGLGGGRGGGGGGDSGGMMG) the composition is skewed to gly residues. A Required for filament formation motif is present at residues 846-847 (FW). Residues 1214 to 1226 (GVGGSSGGGGGSG) are compositionally biased toward gly residues. Residues 1214-1235 (GVGGSSGGGGGSGLLPAKRSRL) are disordered. The required for nuclear localization stretch occupies residues 1232 to 1235 (RSRL).

The protein belongs to the herpesviridae major DNA-binding protein family. In terms of assembly, homooligomers. Forms double-helical filaments necessary for the formation of replication compartments within the host nucleus. Interacts with the origin-binding protein. Interacts with the helicase primase complex; this interaction stimulates primer synthesis activity of the helicase-primase complex. Interacts with the DNA polymerase. Interacts with the alkaline exonuclease; this interaction increases its nuclease processivity.

The protein resides in the host nucleus. Its function is as follows. Plays several crucial roles in viral infection. Participates in the opening of the viral DNA origin to initiate replication by interacting with the origin-binding protein. May disrupt loops, hairpins and other secondary structures present on ssDNA to reduce and eliminate pausing of viral DNA polymerase at specific sites during elongation. Promotes viral DNA recombination by performing strand-transfer, characterized by the ability to transfer a DNA strand from a linear duplex to a complementary single-stranded DNA circle. Can also catalyze the renaturation of complementary single strands. Additionally, reorganizes the host cell nucleus, leading to the formation of prereplicative sites and replication compartments. This process is driven by the protein which can form double-helical filaments in the absence of DNA. The protein is Major DNA-binding protein of Homo sapiens (Human).